Consider the following 234-residue polypeptide: Transcriptional activator protein TraR (234 aa).

In terms of domain architecture, HTH luxR-type spans 167 to 232 (TAEDAAWLDP…HLTALAIKRK (66 aa)). A DNA-binding region (H-T-H motif) is located at residues 191–210 (MEEIADVEEVKYNSVRVKLR).

This sequence belongs to the autoinducer-regulated transcriptional regulatory protein family.

Its function is as follows. Positive regulation of conjugal transfer of Ti plasmids. This Agrobacterium vitis (Rhizobium vitis) protein is Transcriptional activator protein TraR (traR).